A 602-amino-acid chain; its full sequence is Beta-(1--&gt;2)glucan export ATP-binding/permease protein NdvA (602 aa).

The ABC transmembrane type-1 domain maps to 21 to 311 (GWVLAGANLL…VVGFVNSVFM (291 aa)). Helical transmembrane passes span 22-42 (WVLA…PVLF), 68-88 (LLLA…AVAL), 146-166 (EHFA…YINW), 167-187 (RLAL…TLVV), 238-258 (LLAM…ITRA), and 285-305 (IVMF…VVGF). Positions 345 to 579 (VEFDNVSFSY…RGYFAELAHA (235 aa)) constitute an ABC transporter domain. ATP is bound at residue 378-385 (GATGAGKS).

Belongs to the ABC transporter superfamily. Beta-(1--&gt;2)glucan exporter (TC 3.A.1.108.1) family. As to quaternary structure, homodimer.

It is found in the cell inner membrane. The catalysed reaction is [(1-&gt;2)-beta-D-glucosyl](n)(in) + ATP + H2O = [(1-&gt;2)-beta-D-glucosyl](n)(out) + ADP + phosphate + H(+). In terms of biological role, involved in Beta-(1--&gt;2)glucan export. Transmembrane domains (TMD) form a pore in the inner membrane and the ATP-binding domain (NBD) is responsible for energy generation. In Rhodopseudomonas palustris (strain BisA53), this protein is Beta-(1--&gt;2)glucan export ATP-binding/permease protein NdvA.